The following is a 557-amino-acid chain: Potassium-transporting ATPase potassium-binding subunit (557 aa).

A run of 12 helical transmembrane segments spans residues 5-25 (GFLLIATFLLVLMVLARPLGS), 63-83 (LCAILGLNMLGLAVLFFMLLG), 132-152 (GLTVQNFLSAASGIAVIFAFI), 170-190 (LLRITLWVLVPVALLIALFFI), 253-273 (FVQMLAIFLIPTALCFAFGEV), 283-303 (LLWAMSVIFVICVGVVMWAEV), 329-349 (VLVSSLFAVVTTAASCGAVIA), 356-376 (ALGGMVPMWLMQIGEVVFGGV), 379-399 (GLYGMMLFVLLAVFIAGLMIG), 416-436 (LTALAILVTPTLVLMGAALAM), 484-504 (LLAFCMFVGRFGVIIPVMAIA), and 526-546 (LFVGLLIGTVLLVGALTFIPA).

This sequence belongs to the KdpA family. As to quaternary structure, the system is composed of three essential subunits: KdpA, KdpB and KdpC.

The protein resides in the cell inner membrane. Part of the high-affinity ATP-driven potassium transport (or Kdp) system, which catalyzes the hydrolysis of ATP coupled with the electrogenic transport of potassium into the cytoplasm. This subunit binds the periplasmic potassium ions and delivers the ions to the membrane domain of KdpB through an intramembrane tunnel. This Shigella flexneri protein is Potassium-transporting ATPase potassium-binding subunit.